A 73-amino-acid chain; its full sequence is Ocellatin-PT7 (73 aa).

The N-terminal stretch at 1–22 is a signal peptide; that stretch reads MAFLKKSLFLVLFLGLVSLSIC. A propeptide spanning residues 23–39 is cleaved from the precursor; sequence DEEKRQDEDDDDDDDEE.

Expressed by the skin glands.

The protein resides in the secreted. Has antibacterial activity against Gram-negative bacteria E.coli ATCC 25922 (MIC=60 uM) and S.choleraesuis ATCC 14028 (MIC=240 uM) and against Gram-positive bacterium S.aureus ATCC 29313 (MIC=240 uM). Shows no hemolytic activity and no cytotoxicity. This chain is Ocellatin-PT7, found in Leptodactylus pustulatus (Ceara white-lipped frog).